Reading from the N-terminus, the 184-residue chain is Probable sensory rhodopsin transducer (184 aa).

2 consecutive transmembrane segments (helical) span residues Thr14–Tyr34 and Gly52–Gly72. An HAMP domain is found at Arg73–Gln125.

Belongs to the methyl-accepting chemotaxis (MCP) protein family. As to quaternary structure, interacts with Xop2/SRM.

Its subcellular location is the membrane. In terms of biological role, the HtrM-Xop2/SRM complex may interact with CheB or CheR and modulate their availability to Sop1 or Sop2. This chain is Probable sensory rhodopsin transducer (htrM), found in Haloarcula marismortui (strain ATCC 43049 / DSM 3752 / JCM 8966 / VKM B-1809) (Halobacterium marismortui).